The following is a 240-amino-acid chain: Glutathione S-transferase theta-1 (240 aa).

Residues 2 to 82 enclose the GST N-terminal domain; that stretch reads GLELYLDLLS…YLTRKYKVPD (81 aa). Residues His-40, 53–54, and 66–67 contribute to the glutathione site; these read KV and ES. The 133-residue stretch at 88–220 folds into the GST C-terminal domain; sequence DLQARARVDE…HEVILKAKDF (133 aa).

It belongs to the GST superfamily. Theta family. In terms of assembly, homodimer. As to expression, found in erythrocyte. Expressed at low levels in liver. In lung, expressed at low levels in club cells and ciliated cells at the alveolar/bronchiolar junction. Absent from epithelial cells of larger bronchioles.

The protein resides in the cytoplasm. The enzyme catalyses RX + glutathione = an S-substituted glutathione + a halide anion + H(+). Its function is as follows. Conjugation of reduced glutathione to a wide number of exogenous and endogenous hydrophobic electrophiles. Acts on 1,2-epoxy-3-(4-nitrophenoxy)propane, phenethylisothiocyanate 4-nitrobenzyl chloride and 4-nitrophenethyl bromide. Displays glutathione peroxidase activity with cumene hydroperoxide. The polypeptide is Glutathione S-transferase theta-1 (GSTT1) (Homo sapiens (Human)).